The primary structure comprises 400 residues: Na(+)/H(+) antiporter NhaA 1 (400 aa).

Transmembrane regions (helical) follow at residues 25-45 (IVLMFCAIIAIIIANSNFSSM), 67-87 (ILHWINDGLMAIFFLVVGMEI), 103-123 (ILPVSAAIGGMVVPAIIYALF), 130-150 (IIGWGIPMATDIAFALGILSL), 159-179 (IIIFLTALAIVDDLGAIIVIA), 184-204 (SEISWIALILGLIIFLAIILA), 213-233 (WLYIIFGIALWICFLKSGVHE), 264-284 (VLTPLSSFIIMPIFALANSGI), 303-323 (IIFGLFIGKQIGIFGASYILV), 339-359 (LYGASVLGGIGFTMSLFVSSL), and 372-392 (ISIIIASILSAAFGAAIFKII).

This sequence belongs to the NhaA Na(+)/H(+) (TC 2.A.33) antiporter family.

It localises to the cell membrane. The enzyme catalyses Na(+)(in) + 2 H(+)(out) = Na(+)(out) + 2 H(+)(in). In terms of biological role, na(+)/H(+) antiporter that extrudes sodium in exchange for external protons. The polypeptide is Na(+)/H(+) antiporter NhaA 1 (Clostridium beijerinckii (strain ATCC 51743 / NCIMB 8052) (Clostridium acetobutylicum)).